The sequence spans 429 residues: Phosphoribosylamine--glycine ligase (429 aa).

Positions Lys109–Asp316 constitute an ATP-grasp domain. Val135–Ser196 provides a ligand contact to ATP. Positions Ser212–Ser234 are disordered. Basic and acidic residues predominate over residues Gln213 to Thr223. Glu286 and Asn288 together coordinate Mg(2+).

Belongs to the GARS family. It depends on Mg(2+) as a cofactor. Requires Mn(2+) as cofactor.

It catalyses the reaction 5-phospho-beta-D-ribosylamine + glycine + ATP = N(1)-(5-phospho-beta-D-ribosyl)glycinamide + ADP + phosphate + H(+). The protein operates within purine metabolism; IMP biosynthesis via de novo pathway; N(1)-(5-phospho-D-ribosyl)glycinamide from 5-phospho-alpha-D-ribose 1-diphosphate: step 2/2. This chain is Phosphoribosylamine--glycine ligase, found in Vibrio vulnificus (strain CMCP6).